We begin with the raw amino-acid sequence, 22 residues long: Melittin-like peptide (22 aa).

Position 22 is a glutamine amide (glutamine 22).

Expressed by the skin dorsal glands.

It localises to the secreted. The sequence is that of Melittin-like peptide from Rana temporaria (European common frog).